Here is a 185-residue protein sequence, read N- to C-terminus: Gastrokine-1 (185 aa).

The first 20 residues, 1 to 20, serve as a signal peptide directing secretion; the sequence is MKFTIAFAGLLGVFLTPALA. The BRICHOS domain maps to 54-150; the sequence is NNGWNSWNAL…MCKGIPTYMA (97 aa). Cys81 and Cys142 are joined by a disulfide.

This sequence belongs to the gastrokine family. Highly expressed specifically in surface cells of the antrum mucosa from where it is secreted.

Its subcellular location is the secreted. The protein resides in the cytoplasmic granule. The protein localises to the golgi apparatus. Has mitogenic activity and may be involved in maintaining the integrity of the gastric mucosal epithelium. The chain is Gastrokine-1 (GKN1) from Sus scrofa (Pig).